The primary structure comprises 478 residues: Cysteine--tRNA ligase (478 aa).

Cys-29 is a binding site for Zn(2+). The 'HIGH' region motif lies at 31–41 (ATVQSIPHIGH). 3 residues coordinate Zn(2+): Cys-207, His-232, and Glu-236. The short motif at 263 to 267 (KMSKS) is the 'KMSKS' region element. Lys-266 contributes to the ATP binding site.

It belongs to the class-I aminoacyl-tRNA synthetase family. In terms of assembly, monomer. It depends on Zn(2+) as a cofactor.

Its subcellular location is the cytoplasm. It catalyses the reaction tRNA(Cys) + L-cysteine + ATP = L-cysteinyl-tRNA(Cys) + AMP + diphosphate. The polypeptide is Cysteine--tRNA ligase (Corynebacterium jeikeium (strain K411)).